The sequence spans 397 residues: MKFVDEATIIVEAGKGGHGCLSFRREKYVPKGGPDGGDGGDGGSVYLEADSALNTLIDYRFQRKYKAQNGEPGAGRNCTGTKGEDLVLPVPVGTTVVDMDTHEVLGDLTKEGQRLKVAQGGFHGLGNTRFKSSVNRAPRQTSKGSEGEARNLRLELKVLADVGLLGLPNAGKSTFIRSVSAARPKVADYPFTTLVPNLGVVSVQAHQSFVIADIPGLIEGAAEGAGLGIRFLKHLVRTRLLLHLVDVAPYDGSSPADAVRAIAHELEKFSETLASRPRWLVLNKVDMVAEEDREAHCQAIVDELGWEGPVFRISALSGEGTKPLVQAVMRWIEEQAEQEADNPDFAEQEAARRRRMDEEARQKIEADRQARRAARNADDDDDFDDDDYDVEVVYAPE.

The Obg domain occupies 1 to 159; that stretch reads MKFVDEATII…RNLRLELKVL (159 aa). A disordered region spans residues 128-148; it reads TRFKSSVNRAPRQTSKGSEGE. The span at 129–144 shows a compositional bias: polar residues; that stretch reads RFKSSVNRAPRQTSKG. The OBG-type G domain occupies 160 to 333; that stretch reads ADVGLLGLPN…LVQAVMRWIE (174 aa). GTP is bound by residues 166–173, 191–195, 213–216, 283–286, and 314–316; these read GLPNAGKS, FTTLV, DIPG, NKVD, and SAL. Mg(2+) is bound by residues Ser173 and Thr193. Residues 336-347 show a composition bias toward acidic residues; it reads AEQEADNPDFAE. Residues 336 to 397 are disordered; it reads AEQEADNPDF…YDVEVVYAPE (62 aa). Residues 349 to 370 are compositionally biased toward basic and acidic residues; it reads EAARRRRMDEEARQKIEADRQA. A compositionally biased stretch (acidic residues) spans 378–390; the sequence is DDDDDFDDDDYDV.

It belongs to the TRAFAC class OBG-HflX-like GTPase superfamily. OBG GTPase family. Monomer. Requires Mg(2+) as cofactor.

The protein resides in the cytoplasm. Its function is as follows. An essential GTPase which binds GTP, GDP and possibly (p)ppGpp with moderate affinity, with high nucleotide exchange rates and a fairly low GTP hydrolysis rate. Plays a role in control of the cell cycle, stress response, ribosome biogenesis and in those bacteria that undergo differentiation, in morphogenesis control. This is GTPase Obg from Marinobacter nauticus (strain ATCC 700491 / DSM 11845 / VT8) (Marinobacter aquaeolei).